An 801-amino-acid chain; its full sequence is Fibroblast growth factor receptor 3 (801 aa).

The N-terminal stretch at methionine 1–serine 20 is a signal peptide. Topologically, residues glutamate 21–glycine 369 are extracellular. Residues proline 22–threonine 124 form the Ig-like C2-type 1 domain. Cysteines 59 and 107 form a disulfide. Asparagine 96 carries N-linked (GlcNAc...) asparagine glycosylation. Positions aspartate 125–tyrosine 146 are disordered. Residues glycine 130–glutamate 140 show a composition bias toward acidic residues. Ig-like C2-type domains follow at residues proline 145–aspartate 238 and proline 247–valine 349. The cysteines at positions 170 and 222 are disulfide-linked. N-linked (GlcNAc...) asparagine glycans are attached at residues asparagine 219, asparagine 256, asparagine 288, asparagine 309, and asparagine 322. An intrachain disulfide couples cysteine 269 to cysteine 333. A helical membrane pass occupies residues valine 370–cysteine 390. Residues arginine 391 to threonine 801 lie on the Cytoplasmic side of the membrane. Serine 438 and serine 439 each carry phosphoserine. The Protein kinase domain occupies leucine 466–leucine 756. Residues leucine 472 to valine 480 and lysine 502 contribute to the ATP site. Aspartate 611 serves as the catalytic Proton acceptor. Phosphotyrosine; by autocatalysis occurs at positions 641, 642, 719, and 755. The interval phenylalanine 762 to threonine 801 is disordered. Over residues serine 766 to serine 782 the composition is skewed to low complexity. A compositionally biased stretch (pro residues) spans proline 790–threonine 801.

Belongs to the protein kinase superfamily. Tyr protein kinase family. Fibroblast growth factor receptor subfamily. In terms of assembly, monomer. Homodimer after ligand binding. Interacts with FGF1, FGF2, FGF4, FGF6; FGF8, FGF9, FGF10, FGF17, FGF18, FGF19, FGF20 and FGF23 (in vitro). Interacts with KLB. Affinity for fibroblast growth factors (FGFs) is increased by heparan sulfate glycosaminoglycans that function as coreceptors. Likewise, KLB increases the affinity for FGF19 and FGF21. Interacts with PIK3R1, PLCG1, SOCS1 and SOCS3. Autophosphorylated. Binding of FGF family members together with heparan sulfate proteoglycan or heparin promotes receptor dimerization and autophosphorylation on tyrosine residues. Autophosphorylation occurs in trans between the two FGFR molecules present in the dimer. Phosphorylation at Tyr-719 is essential for stimulation of cell proliferation and activation of PIK3R1, STAT1 and MAP kinase signaling. Phosphorylation at Tyr-755 is required for interaction with PIK3R1 and PLCG1. Post-translationally, ubiquitinated. Is rapidly ubiquitinated after ligand binding and autophosphorylation, leading to receptor internalization and degradation. Subject to both proteasomal and lysosomal degradation. In terms of processing, N-glycosylated in the endoplasmic reticulum. The N-glycan chains undergo further maturation to an Endo H-resistant form in the Golgi apparatus. In embryo, expressed in heart, lung, kidney, skin, head and liver but not in muscle. In adult, highest levels in brain. Also expressed in liver, lung, kidney, testis, ovary and uterus. Very low levels in heart, thymus, spleen and muscle.

Its subcellular location is the cell membrane. The protein resides in the cytoplasmic vesicle. It is found in the endoplasmic reticulum. The catalysed reaction is L-tyrosyl-[protein] + ATP = O-phospho-L-tyrosyl-[protein] + ADP + H(+). Present in an inactive conformation in the absence of bound ligand. Ligand binding leads to dimerization and activation by autophosphorylation on tyrosine residues. Functionally, tyrosine-protein kinase that acts as a cell-surface receptor for fibroblast growth factors and plays an essential role in the regulation of cell proliferation, differentiation and apoptosis. Plays an essential role in the regulation of chondrocyte differentiation, proliferation and apoptosis, and is required for normal skeleton development. Regulates both osteogenesis and postnatal bone mineralization by osteoblasts. Promotes apoptosis in chondrocytes, but can also promote cancer cell proliferation. Required for normal development of the inner ear. Phosphorylates PLCG1, CBL and FRS2. Ligand binding leads to the activation of several signaling cascades. Activation of PLCG1 leads to the production of the cellular signaling molecules diacylglycerol and inositol 1,4,5-trisphosphate. Phosphorylation of FRS2 triggers recruitment of GRB2, GAB1, PIK3R1 and SOS1, and mediates activation of RAS, MAPK1/ERK2, MAPK3/ERK1 and the MAP kinase signaling pathway, as well as of the AKT1 signaling pathway. Plays a role in the regulation of vitamin D metabolism. Mutations that lead to constitutive kinase activation or impair normal FGFR3 maturation, internalization and degradation lead to aberrant signaling. Over-expressed or constitutively activated FGFR3 promotes activation of STAT1, STAT5A and STAT5B. Plays a role in postnatal lung development. The sequence is that of Fibroblast growth factor receptor 3 (Fgfr3) from Mus musculus (Mouse).